The following is a 398-amino-acid chain: Phosphoglycerate kinase (398 aa).

Substrate is bound by residues aspartate 21 to asparagine 23, arginine 36, histidine 59 to arginine 62, arginine 117, and arginine 150. Residues lysine 200, glutamate 321, and glycine 351 to serine 354 each bind ATP.

The protein belongs to the phosphoglycerate kinase family. As to quaternary structure, monomer.

The protein localises to the cytoplasm. The enzyme catalyses (2R)-3-phosphoglycerate + ATP = (2R)-3-phospho-glyceroyl phosphate + ADP. It functions in the pathway carbohydrate degradation; glycolysis; pyruvate from D-glyceraldehyde 3-phosphate: step 2/5. The sequence is that of Phosphoglycerate kinase from Wolbachia pipientis wMel.